Consider the following 147-residue polypeptide: Lysozyme C (147 aa).

Positions 1–18 (MRSLLILVLCFLPLAALG) are cleaved as a signal peptide. The C-type lysozyme domain occupies 19–147 (KVFGRCELAA…VQAWIRGCRL (129 aa)). Intrachain disulfides connect Cys24–Cys145, Cys48–Cys133, Cys82–Cys98, and Cys94–Cys112. Residues Glu53 and Asp70 contribute to the active site. Asp119 lines the substrate pocket.

It belongs to the glycosyl hydrolase 22 family. In terms of assembly, monomer. In terms of tissue distribution, in the egg white and polymorphonuclear leukocytes.

It is found in the secreted. It carries out the reaction Hydrolysis of (1-&gt;4)-beta-linkages between N-acetylmuramic acid and N-acetyl-D-glucosamine residues in a peptidoglycan and between N-acetyl-D-glucosamine residues in chitodextrins.. Functionally, lysozymes have primarily a bacteriolytic function; those in tissues and body fluids are associated with the monocyte-macrophage system and enhance the activity of immunoagents. Has bacteriolytic activity against M.luteus. The chain is Lysozyme C (LYZ) from Gallus gallus (Chicken).